Consider the following 145-residue polypeptide: Protein AggB (145 aa).

The signal sequence occupies residues 1–24 (MLKKSILPMSCGVLVMVMSGLLDA).

This sequence to E.coli AfaD.

In Escherichia coli, this protein is Protein AggB (aggB).